The sequence spans 1150 residues: Fl(2)d-associated complex component (1150 aa).

Basic and acidic residues predominate over residues 1-10; the sequence is MEKKAKESLR. Disordered stretches follow at residues 1-444, 477-710, 833-914, and 1034-1053; these read MEKK…EEER, QGRE…PPPL, ASED…MDTN, and KEQGQQRELDGDEEPPAKIP. The segment covering 11–20 has biased composition (basic residues); that stretch reads RYKKAARHSA. Residues 21–44 are compositionally biased toward low complexity; it reads THSSSSDSTSDSDSGSSSYSSTDS. The segment covering 47–69 has biased composition (gly residues); sequence GVGGVGVGVGVPGGAGGPGGSGS. The span at 72 to 97 shows a compositional bias: basic residues; that stretch reads GHPHTHGHGHHPRSAERHHRKKKSSR. Low complexity predominate over residues 98-107; sequence RGGSSSGDEP. 2 stretches are compositionally biased toward basic residues: residues 110–144 and 162–175; these read SRRKRDKRDHVQKKLVAKRNHIKRKLKEARLKKRA and AKLKKLAERKRLRA. A coiled-coil region spans residues 122–147; that stretch reads KKLVAKRNHIKRKLKEARLKKRAAAA. The segment covering 176-199 has biased composition (basic and acidic residues); sequence ASKEQRERDKLRVVQRDRERDHHR. A compositionally biased stretch (low complexity) spans 202–215; the sequence is SSRSPPSSSTTTTT. Positions 269 to 347 form a coiled coil; the sequence is PSLERERERE…KLRRQEEEEG (79 aa). Composition is skewed to basic and acidic residues over residues 270-414, 428-444, and 492-529; these read SLER…DEMR, YAPRLRDPRELYSEEER, and PDERERLIRDRERDRERERDRERERNIGPRGDFRPEWE. Residues 537–558 show a composition bias toward gly residues; that stretch reads AGGGPGGPSGTPGRPGGFVGGP. Composition is skewed to basic and acidic residues over residues 589 to 611 and 630 to 640; these read ERERERERERDRERERDREDRPD and WLEHDQREKPR. A compositionally biased stretch (pro residues) spans 660–669; that stretch reads PPAPSHPHPA. Residues 693–702 are compositionally biased toward basic and acidic residues; it reads GHGDHGERPG. Low complexity predominate over residues 851–861; that stretch reads QSLNLNQSLSS. Acidic residues predominate over residues 879-889; that stretch reads ELSEISDSDDD. The segment covering 890-903 has biased composition (basic and acidic residues); sequence ILNKTDKVRPKNEL. Over residues 905–914 the composition is skewed to acidic residues; it reads TETEQEMDTN.

It belongs to the ZC3H13 family. As to quaternary structure, component of the WMM complex, a N6-methyltransferase complex composed of a catalytic subcomplex, named MAC, and of an associated subcomplex, named MACOM. The MAC subcomplex is composed of Ime4/Mettl3 and Mettl14. The MACOM subcomplex is composed of fl(2)d, Flacc/Xio, Hakai, vir, and, in some cases of nito. As to expression, widely expressed during embryogenesis but shows enrichment in the neuroectoderm.

Its subcellular location is the nucleus. Functionally, associated component of the WMM complex, a complex that mediates N6-methyladenosine (m6A) methylation of mRNAs, a modification that plays a role in the efficiency of mRNA splicing and is required for sex determination. In the WMM complex, acts as a key regulator of m6A methylation by bridging fl(2)d to the RNA-binding component nito. Required for sex determination and dosage compensation via Sxl alternative splicing: m6A methylation acts as a key regulator of Sxl pre-mRNA and promotes female-specific alternative splicing of Sxl, which determines female physiognomy. The sequence is that of Fl(2)d-associated complex component from Drosophila melanogaster (Fruit fly).